A 126-amino-acid chain; its full sequence is MFYTILCVGTGGFVGAILRFLFYFGFAQFFSQKYIFIATICVNIIGSFIIGFVLNIATTYAINYNFKNFLVTGLLGALTTFSTFTYENAVFLNHGEISKFFLNITMSIILCLIFCFLGIYTAKIIH.

Helical transmembrane passes span 5–25 (ILCV…FYFG), 34–54 (YIFI…GFVL), 71–91 (VTGL…NAVF), and 100–120 (FFLN…LGIY). Na(+)-binding residues include glycine 76 and threonine 79.

This sequence belongs to the fluoride channel Fluc/FEX (TC 1.A.43) family.

It is found in the cell inner membrane. The enzyme catalyses fluoride(in) = fluoride(out). Its activity is regulated as follows. Na(+) is not transported, but it plays an essential structural role and its presence is essential for fluoride channel function. In terms of biological role, fluoride-specific ion channel. Important for reducing fluoride concentration in the cell, thus reducing its toxicity. This chain is Fluoride-specific ion channel FluC, found in Campylobacter hominis (strain ATCC BAA-381 / DSM 21671 / CCUG 45161 / LMG 19568 / NCTC 13146 / CH001A).